The following is a 117-amino-acid chain: Ribosome-binding factor A (117 aa).

It belongs to the RbfA family. In terms of assembly, monomer. Binds 30S ribosomal subunits, but not 50S ribosomal subunits or 70S ribosomes.

The protein localises to the cytoplasm. Its function is as follows. One of several proteins that assist in the late maturation steps of the functional core of the 30S ribosomal subunit. Associates with free 30S ribosomal subunits (but not with 30S subunits that are part of 70S ribosomes or polysomes). Required for efficient processing of 16S rRNA. May interact with the 5'-terminal helix region of 16S rRNA. The sequence is that of Ribosome-binding factor A from Syntrophobacter fumaroxidans (strain DSM 10017 / MPOB).